A 157-amino-acid polypeptide reads, in one-letter code: Phosphopantetheine adenylyltransferase (157 aa).

A substrate-binding site is contributed by threonine 8. ATP contacts are provided by residues 8–9 and histidine 16; that span reads TF. Substrate is bound by residues lysine 40, threonine 72, and arginine 86. ATP-binding positions include 87–89, glutamate 97, and 122–128; these read GLR and YSFLSSS.

This sequence belongs to the bacterial CoaD family. Homohexamer. Mg(2+) serves as cofactor.

It is found in the cytoplasm. It carries out the reaction (R)-4'-phosphopantetheine + ATP + H(+) = 3'-dephospho-CoA + diphosphate. The protein operates within cofactor biosynthesis; coenzyme A biosynthesis; CoA from (R)-pantothenate: step 4/5. In terms of biological role, reversibly transfers an adenylyl group from ATP to 4'-phosphopantetheine, yielding dephospho-CoA (dPCoA) and pyrophosphate. The chain is Phosphopantetheine adenylyltransferase from Prochlorococcus marinus (strain AS9601).